The chain runs to 142 residues: Large ribosomal subunit protein uL13 (142 aa).

The protein belongs to the universal ribosomal protein uL13 family. In terms of assembly, part of the 50S ribosomal subunit.

Its function is as follows. This protein is one of the early assembly proteins of the 50S ribosomal subunit, although it is not seen to bind rRNA by itself. It is important during the early stages of 50S assembly. The polypeptide is Large ribosomal subunit protein uL13 (Azotobacter vinelandii (strain DJ / ATCC BAA-1303)).